Consider the following 93-residue polypeptide: YcgL domain-containing protein KPK_1976 (93 aa).

The 85-residue stretch at 1–85 (MFCVIYRSTK…PSENLLKKHL (85 aa)) folds into the YcgL domain.

The chain is YcgL domain-containing protein KPK_1976 from Klebsiella pneumoniae (strain 342).